Consider the following 1355-residue polypeptide: Collagen alpha-2(I) chain (1355 aa).

An N-terminal signal peptide occupies residues 1–22 (MLSFVDLRSVLLLAVTLYLVTC). Pyrrolidone carboxylic acid is present on Gln23. A propeptide spans 23-71 (QEVRRGPRGDKGPPGEQGPPGIPGRDGEDGLPGLPGPPGVPGLGGNFAA) (N-terminal propeptide). The span at 26–35 (RRGPRGDKGP) shows a compositional bias: basic and acidic residues. Residues 26–1111 (RRGPRGDKGP…GDGGEYYRAD (1086 aa)) form a disordered region. Gln72 is subject to Pyrrolidone carboxylic acid. Lys77 is modified (allysine). A compositionally biased stretch (low complexity) spans 99–108 (PGSQGFQGLP). Residues 132–146 (AGEDGHPGKSGRPGE) are compositionally biased toward basic and acidic residues. A 5-hydroxylysine; alternate modification is found at Lys168. The O-linked (Gal...) hydroxylysine; alternate glycan is linked to Lys168. Residues 218-267 (PAGSAGSRGSDGSSGPVGPAGPIGSAGAPGLPGAPGAKGELGPAGNNGPT) show a composition bias toward low complexity. Pro residues predominate over residues 276-290 (PGPPGSLGPAGPPGN). The segment covering 291–303 (PGTNGVNGAKGTA) has biased composition (low complexity). Residues 304–322 (GLPGVGGAPGLPGGRGIPG) show a composition bias toward gly residues. Residues 327 to 336 (AGPSGARGLA) show a composition bias toward low complexity. 2 stretches are compositionally biased toward gly residues: residues 340-349 (GIAGGKGDTG) and 403-412 (GRAGGIGPAG). 2 stretches are compositionally biased toward low complexity: residues 413–426 (SRGS…RGPN) and 465–495 (EGRS…NGEP). 2 stretches are compositionally biased toward gly residues: residues 523 to 532 (GPAGLGGATG) and 586 to 595 (GESGGAGPHG). Residues 596 to 618 (PSGSRGPSGAPGPDGQKGEPGAA) are compositionally biased toward low complexity. The segment covering 619 to 628 (GLNGGLGPSG) has biased composition (gly residues). 3 stretches are compositionally biased toward low complexity: residues 659-675 (NPGR…AGAP), 687-701 (SGPA…PRGA), and 708-726 (AGPA…AGHT). Residues 728–738 (AKGDRGAKGPK) are compositionally biased toward basic and acidic residues. Low complexity-rich tracts occupy residues 741–767 (AGSP…STGA) and 776–788 (ATGF…RAGA). Residues 804–813 (PGKDGSRGPR) show a composition bias toward basic and acidic residues. A compositionally biased stretch (low complexity) spans 852–869 (AGPSGVLGARGILGLPGT). Over residues 874–883 (GLPGGPGSNG) the composition is skewed to gly residues. Composition is skewed to low complexity over residues 884 to 912 (EPGP…VGHS) and 947 to 966 (PSGL…AGKS). The span at 967-976 (GNRGEGGPSG) shows a compositional bias: gly residues. Over residues 996 to 1014 (RGDKGEAGERGARGLDGRK) the composition is skewed to basic and acidic residues. The segment covering 1019 to 1041 (LSGLPGPSGTPGETGPSGSVGPV) has biased composition (low complexity). Over residues 1080-1091 (AGPPGPPGPPGH) the composition is skewed to pro residues. Residues 1093–1105 (GPSGGGYDGGDGG) are compositionally biased toward gly residues. The propeptide at 1111–1355 (DQPERKPKDY…GFEIGPVCFK (245 aa)) is C-terminal propeptide. The Fibrillar collagen NC1 domain occupies 1120-1355 (YEVDATLKSL…GFEIGPVCFK (236 aa)). 3 disulfide bridges follow: Cys1150-Cys1182, Cys1190-Cys1353, and Cys1261-Cys1306. The Ca(2+) site is built by Asp1168, Asn1170, Gln1171, Cys1173, and Asp1176. Residues Asn1206 and Asn1256 are each glycosylated (N-linked (GlcNAc...) asparagine).

This sequence belongs to the fibrillar collagen family. As to quaternary structure, trimers of one alpha 2(I) and two alpha 1(I) chains. Post-translationally, prolines at the third position of the tripeptide repeating unit (G-X-Y) are hydroxylated in some or all of the chains. In terms of tissue distribution, forms the fibrils of tendon, ligaments and bones. In bones the fibrils are mineralized with calcium hydroxyapatite.

The protein localises to the secreted. Its subcellular location is the extracellular space. It is found in the extracellular matrix. Type I collagen is a member of group I collagen (fibrillar forming collagen). This Aquarana catesbeiana (American bullfrog) protein is Collagen alpha-2(I) chain (COL1A2).